The following is a 287-amino-acid chain: uncharacterized protein (287 aa).

Catalysis depends on charge relay system residues Thr-43 and Tyr-104. Tyr-130 (proton donor) is an active-site residue. Lys-158 (schiff-base intermediate with substrate) is an active-site residue.

This sequence belongs to the DapA family. In terms of assembly, homotetramer.

Its subcellular location is the cytoplasm. This is an uncharacterized protein from Pyrococcus horikoshii (strain ATCC 700860 / DSM 12428 / JCM 9974 / NBRC 100139 / OT-3).